An 89-amino-acid polypeptide reads, in one-letter code: MLKDTLKVKNLVMKYGKSYLNTGSSSVQIALLTRKINYLQKHFILHKEDHCGRKGLLNMVSRRRKLLDYLKSNQYENYLFLIKKLGLRH.

This sequence belongs to the universal ribosomal protein uS15 family. In terms of assembly, part of the 30S ribosomal subunit. Forms a bridge to the 50S subunit in the 70S ribosome, contacting the 23S rRNA.

One of the primary rRNA binding proteins, it binds directly to 16S rRNA where it helps nucleate assembly of the platform of the 30S subunit by binding and bridging several RNA helices of the 16S rRNA. Its function is as follows. Forms an intersubunit bridge (bridge B4) with the 23S rRNA of the 50S subunit in the ribosome. The protein is Small ribosomal subunit protein uS15 of Buchnera aphidicola subsp. Cinara cedri (strain Cc).